A 226-amino-acid polypeptide reads, in one-letter code: Ribonuclease HII (226 aa).

In terms of domain architecture, RNase H type-2 spans 29–220; that stretch reads GPVAGVDEAG…VVAAGVRLEQ (192 aa). A divalent metal cation contacts are provided by D35, E36, and D129.

It belongs to the RNase HII family. Mn(2+) serves as cofactor. Mg(2+) is required as a cofactor.

The protein resides in the cytoplasm. The enzyme catalyses Endonucleolytic cleavage to 5'-phosphomonoester.. Endonuclease that specifically degrades the RNA of RNA-DNA hybrids. The chain is Ribonuclease HII from Rhodococcus erythropolis (strain PR4 / NBRC 100887).